Reading from the N-terminus, the 208-residue chain is Imidazole glycerol phosphate synthase subunit HisH (208 aa).

In terms of domain architecture, Glutamine amidotransferase type-1 spans 1 to 206 (MIVIIDYDTG…KEVIRSCKSS (206 aa)). The active-site Nucleophile is Cys-79. Residues His-181 and Glu-183 contribute to the active site.

As to quaternary structure, heterodimer of HisH and HisF.

It localises to the cytoplasm. It catalyses the reaction 5-[(5-phospho-1-deoxy-D-ribulos-1-ylimino)methylamino]-1-(5-phospho-beta-D-ribosyl)imidazole-4-carboxamide + L-glutamine = D-erythro-1-(imidazol-4-yl)glycerol 3-phosphate + 5-amino-1-(5-phospho-beta-D-ribosyl)imidazole-4-carboxamide + L-glutamate + H(+). The catalysed reaction is L-glutamine + H2O = L-glutamate + NH4(+). It participates in amino-acid biosynthesis; L-histidine biosynthesis; L-histidine from 5-phospho-alpha-D-ribose 1-diphosphate: step 5/9. Its function is as follows. IGPS catalyzes the conversion of PRFAR and glutamine to IGP, AICAR and glutamate. The HisH subunit catalyzes the hydrolysis of glutamine to glutamate and ammonia as part of the synthesis of IGP and AICAR. The resulting ammonia molecule is channeled to the active site of HisF. The protein is Imidazole glycerol phosphate synthase subunit HisH of Listeria welshimeri serovar 6b (strain ATCC 35897 / DSM 20650 / CCUG 15529 / CIP 8149 / NCTC 11857 / SLCC 5334 / V8).